A 144-amino-acid chain; its full sequence is Nucleoside diphosphate kinase (144 aa).

Residues Lys-9, Phe-57, Arg-85, Thr-91, Arg-102, and Asn-112 each coordinate ATP. The active-site Pros-phosphohistidine intermediate is His-120.

Belongs to the NDK family. In terms of assembly, homotetramer. Mg(2+) serves as cofactor.

The protein resides in the cytoplasm. It carries out the reaction a 2'-deoxyribonucleoside 5'-diphosphate + ATP = a 2'-deoxyribonucleoside 5'-triphosphate + ADP. The enzyme catalyses a ribonucleoside 5'-diphosphate + ATP = a ribonucleoside 5'-triphosphate + ADP. Functionally, major role in the synthesis of nucleoside triphosphates other than ATP. The ATP gamma phosphate is transferred to the NDP beta phosphate via a ping-pong mechanism, using a phosphorylated active-site intermediate. In Streptococcus uberis (strain ATCC BAA-854 / 0140J), this protein is Nucleoside diphosphate kinase.